A 61-amino-acid chain; its full sequence is Large ribosomal subunit protein uL30 (61 aa).

The protein belongs to the universal ribosomal protein uL30 family. Part of the 50S ribosomal subunit.

This chain is Large ribosomal subunit protein uL30, found in Thermosipho africanus (strain TCF52B).